Consider the following 446-residue polypeptide: Indoleacetamide hydrolase (446 aa).

Catalysis depends on charge relay system residues Lys71 and Ser146. The active-site Acyl-ester intermediate is the Ser170.

It belongs to the amidase family.

It participates in plant hormone metabolism; auxin biosynthesis. In terms of biological role, hydrolyzes indole-3-acetamide (IAM) into indole-3-acetic acid (IAA). The chain is Indoleacetamide hydrolase (iaaH) from Pseudomonas syringae pv. syringae.